A 652-amino-acid polypeptide reads, in one-letter code: Probable potassium transport system protein Kup (652 aa).

The segment covering 1–20 (MSNDTSPGTSSVDSKSSDPS) has biased composition (low complexity). The disordered stretch occupies residues 1–26 (MSNDTSPGTSSVDSKSSDPSYGVPGH). A run of 12 helical transmembrane segments spans residues 36–56 (LSLG…LYAL), 76–96 (LVSL…VMFI), 125–145 (WLIV…MITP), 161–181 (PSFD…LFCI), 193–213 (FGPI…FNII), 228–248 (AIHF…SVVL), 270–290 (LGWY…QCAL), 314–334 (LIIL…TGAF), 362–382 (IYIP…IAMF), 391–411 (AYGI…GVLV), 419–439 (AWQS…FFLS), and 444–464 (IPEG…MLMT).

It belongs to the HAK/KUP transporter (TC 2.A.72) family.

It localises to the cell inner membrane. The enzyme catalyses K(+)(in) + H(+)(in) = K(+)(out) + H(+)(out). Its function is as follows. Transport of potassium into the cell. Likely operates as a K(+):H(+) symporter. This chain is Probable potassium transport system protein Kup, found in Zymomonas mobilis subsp. mobilis (strain ATCC 31821 / ZM4 / CP4).